A 155-amino-acid chain; its full sequence is Small ribosomal subunit protein uS17 (155 aa).

The residue at position 2 (alanine 2) is an N-acetylalanine.

This sequence belongs to the universal ribosomal protein uS17 family.

This is Small ribosomal subunit protein uS17 from Drosophila yakuba (Fruit fly).